The sequence spans 117 residues: Large ribosomal subunit protein uL18 (117 aa).

It belongs to the universal ribosomal protein uL18 family. Part of the 50S ribosomal subunit; part of the 5S rRNA/L5/L18/L25 subcomplex. Contacts the 5S and 23S rRNAs.

Its function is as follows. This is one of the proteins that bind and probably mediate the attachment of the 5S RNA into the large ribosomal subunit, where it forms part of the central protuberance. This Polynucleobacter necessarius subsp. necessarius (strain STIR1) protein is Large ribosomal subunit protein uL18.